The sequence spans 345 residues: Phosphate acyltransferase (345 aa).

The protein belongs to the PlsX family. In terms of assembly, homodimer. Probably interacts with PlsY.

The protein resides in the cytoplasm. The enzyme catalyses a fatty acyl-[ACP] + phosphate = an acyl phosphate + holo-[ACP]. Its pathway is lipid metabolism; phospholipid metabolism. Functionally, catalyzes the reversible formation of acyl-phosphate (acyl-PO(4)) from acyl-[acyl-carrier-protein] (acyl-ACP). This enzyme utilizes acyl-ACP as fatty acyl donor, but not acyl-CoA. This is Phosphate acyltransferase from Chromobacterium violaceum (strain ATCC 12472 / DSM 30191 / JCM 1249 / CCUG 213 / NBRC 12614 / NCIMB 9131 / NCTC 9757 / MK).